The following is a 420-amino-acid chain: Glucose-1-phosphate adenylyltransferase (420 aa).

Residues tyrosine 107, glycine 172, 187-188 (EK), and serine 205 each bind alpha-D-glucose 1-phosphate.

The protein belongs to the bacterial/plant glucose-1-phosphate adenylyltransferase family. Homotetramer.

It catalyses the reaction alpha-D-glucose 1-phosphate + ATP + H(+) = ADP-alpha-D-glucose + diphosphate. Its pathway is glycan biosynthesis; glycogen biosynthesis. Its function is as follows. Involved in the biosynthesis of ADP-glucose, a building block required for the elongation reactions to produce glycogen. Catalyzes the reaction between ATP and alpha-D-glucose 1-phosphate (G1P) to produce pyrophosphate and ADP-Glc. The polypeptide is Glucose-1-phosphate adenylyltransferase (Rhizobium leguminosarum bv. trifolii (strain WSM2304)).